The following is a 339-amino-acid chain: Dihydroorotate dehydrogenase (quinone) (339 aa).

FMN contacts are provided by residues alanine 62 to lysine 66 and threonine 86. Residue lysine 66 coordinates substrate. Asparagine 111–phenylalanine 115 is a substrate binding site. 2 residues coordinate FMN: asparagine 139 and asparagine 172. Asparagine 172 contacts substrate. The active-site Nucleophile is the serine 175. Asparagine 177 is a binding site for substrate. Residues lysine 217 and threonine 245 each contribute to the FMN site. Asparagine 246–threonine 247 serves as a coordination point for substrate. FMN is bound by residues glycine 268, glycine 297, and tyrosine 318–serine 319.

This sequence belongs to the dihydroorotate dehydrogenase family. Type 2 subfamily. In terms of assembly, monomer. FMN serves as cofactor.

It localises to the cell membrane. The catalysed reaction is (S)-dihydroorotate + a quinone = orotate + a quinol. The protein operates within pyrimidine metabolism; UMP biosynthesis via de novo pathway; orotate from (S)-dihydroorotate (quinone route): step 1/1. Catalyzes the conversion of dihydroorotate to orotate with quinone as electron acceptor. In Shewanella sp. (strain ANA-3), this protein is Dihydroorotate dehydrogenase (quinone).